Here is a 223-residue protein sequence, read N- to C-terminus: UPF0502 protein Shew185_1758 (223 aa).

Belongs to the UPF0502 family.

This Shewanella baltica (strain OS185) protein is UPF0502 protein Shew185_1758.